A 206-amino-acid chain; its full sequence is Recombination protein RecR (206 aa).

Residues C60 to C75 form a C4-type zinc finger. One can recognise a Toprim domain in the interval R83–P178.

The protein belongs to the RecR family.

In terms of biological role, may play a role in DNA repair. It seems to be involved in an RecBC-independent recombinational process of DNA repair. It may act with RecF and RecO. This is Recombination protein RecR from Neisseria gonorrhoeae (strain NCCP11945).